A 317-amino-acid polypeptide reads, in one-letter code: Lactamase-like protein adaB (317 aa).

Residues His97, His99, Asp101, and His102 each coordinate Zn(2+). Residue Asp101 is the Proton donor/acceptor of the active site.

It belongs to the metallo-beta-lactamase superfamily. Zn(2+) is required as a cofactor.

The catalysed reaction is 3-(2,4-dioxopentyl)-2,3,6,8,9-pentahydroxy-1-oxo-1,2,3,4-tetrahydroanthracene-2-carboxyl-[ACP] = 2-acetyl-3,4a,8,10,11,12a-hexahydroxy-1,4,4a,5,12,12a-hexahydrotetracene-1,12-dione + holo-[ACP] + H(+). It participates in secondary metabolite biosynthesis. In terms of biological role, lactamase-like protein; part of the gene cluster that mediates the biosynthesis of the linear tetracyclic TAN-1612 neuropeptide Y receptor antagonist. The decaketide backbone of TAN-1612 is synthesized by the non-reducing polyketide synthase adaA via condensation of one acetyl-CoA starter unit with 9 malonyl-CoA units. The FAD-dependent monooxygenase adaC then performs hydroxylation at C2 while the polaketide chain is still attached to the NRPKS adaA. The alpha-hydroxylation step at C2 appears to be crucial for the following C18-C1 Claisen cyclization and release of the C9-hydroxyl version of TAN-1612 from the NRPKS adaA, two steps performed by the lactamase-like protein adaB. Finally, the O-methyltransferase adaD performs the C9 O-methylation to complete the biosynthesis of TAN-1612. In Aspergillus niger (strain ATCC MYA-4892 / CBS 513.88 / FGSC A1513), this protein is Lactamase-like protein adaB.